A 361-amino-acid chain; its full sequence is Phosphoserine aminotransferase (361 aa).

L-glutamate is bound at residue arginine 42. Residues 76 to 77 (AT), tryptophan 102, threonine 152, aspartate 172, and glutamine 195 each bind pyridoxal 5'-phosphate. Lysine 196 carries the post-translational modification N6-(pyridoxal phosphate)lysine. Position 237–238 (237–238 (NT)) interacts with pyridoxal 5'-phosphate.

The protein belongs to the class-V pyridoxal-phosphate-dependent aminotransferase family. SerC subfamily. As to quaternary structure, homodimer. Pyridoxal 5'-phosphate is required as a cofactor.

The protein localises to the cytoplasm. The enzyme catalyses O-phospho-L-serine + 2-oxoglutarate = 3-phosphooxypyruvate + L-glutamate. The catalysed reaction is 4-(phosphooxy)-L-threonine + 2-oxoglutarate = (R)-3-hydroxy-2-oxo-4-phosphooxybutanoate + L-glutamate. The protein operates within amino-acid biosynthesis; L-serine biosynthesis; L-serine from 3-phospho-D-glycerate: step 2/3. It functions in the pathway cofactor biosynthesis; pyridoxine 5'-phosphate biosynthesis; pyridoxine 5'-phosphate from D-erythrose 4-phosphate: step 3/5. Functionally, catalyzes the reversible conversion of 3-phosphohydroxypyruvate to phosphoserine and of 3-hydroxy-2-oxo-4-phosphonooxybutanoate to phosphohydroxythreonine. This Xanthomonas oryzae pv. oryzae (strain MAFF 311018) protein is Phosphoserine aminotransferase.